Here is a 264-residue protein sequence, read N- to C-terminus: Stress response regulator protein 1 (264 aa).

The tract at residues 50–74 (IYSDCDNNKNNNDDDDDDDDYNKDT) is disordered. The span at 62–74 (DDDDDDDDYNKDT) shows a compositional bias: acidic residues. The Response regulatory domain occupies 138–256 (RFLIVDDNII…LDLIGGSIDD (119 aa)). Asp-189 is subject to 4-aspartylphosphate.

Required for stress adaptation, morphogenesis and virulence. The chain is Stress response regulator protein 1 (SRR1) from Candida tropicalis (strain ATCC MYA-3404 / T1) (Yeast).